Reading from the N-terminus, the 205-residue chain is Holliday junction branch migration complex subunit RuvA (205 aa).

Positions 1-64 (MIGRLNGILV…EDAQLLFGFN (64 aa)) are domain I. The tract at residues 65 to 143 (NKVERALFRE…NWGNDLFTPF (79 aa)) is domain II. A flexible linker region spans residues 144-156 (SDSAVIEPFSDAT). The domain III stretch occupies residues 157–205 (IANNAADDAVSALVSLGYKLPQAQKAVKSVSKPDMSTEVLIKESLKSML).

Belongs to the RuvA family. In terms of assembly, homotetramer. Forms an RuvA(8)-RuvB(12)-Holliday junction (HJ) complex. HJ DNA is sandwiched between 2 RuvA tetramers; dsDNA enters through RuvA and exits via RuvB. An RuvB hexamer assembles on each DNA strand where it exits the tetramer. Each RuvB hexamer is contacted by two RuvA subunits (via domain III) on 2 adjacent RuvB subunits; this complex drives branch migration. In the full resolvosome a probable DNA-RuvA(4)-RuvB(12)-RuvC(2) complex forms which resolves the HJ.

Its subcellular location is the cytoplasm. Its function is as follows. The RuvA-RuvB-RuvC complex processes Holliday junction (HJ) DNA during genetic recombination and DNA repair, while the RuvA-RuvB complex plays an important role in the rescue of blocked DNA replication forks via replication fork reversal (RFR). RuvA specifically binds to HJ cruciform DNA, conferring on it an open structure. The RuvB hexamer acts as an ATP-dependent pump, pulling dsDNA into and through the RuvAB complex. HJ branch migration allows RuvC to scan DNA until it finds its consensus sequence, where it cleaves and resolves the cruciform DNA. The sequence is that of Holliday junction branch migration complex subunit RuvA from Pseudoalteromonas translucida (strain TAC 125).